The sequence spans 44 residues: uncharacterized protein (44 aa).

The chain crosses the membrane as a helical span at residues 6–26 (SILIRGGGGVLIVLILLLWIV).

Its subcellular location is the membrane. This is an uncharacterized protein from Ornithodoros (relapsing fever ticks).